A 116-amino-acid polypeptide reads, in one-letter code: Putative antiporter subunit mnhC2 (116 aa).

Transmembrane regions (helical) follow at residues 3–23 (LILLMVIGFLIFIGTYMILSV), 28–48 (IVIGISIYTHAGNLIIMSMGN), and 72–92 (AIVLTAIVIGFAMTAFLLVLV).

It belongs to the CPA3 antiporters (TC 2.A.63) subunit C family. In terms of assembly, may form a heterooligomeric complex that consists of seven subunits: mnhA2, mnhB2, mnhC2, mnhD2, mnhE2, mnhF2 and mnhG2.

The protein localises to the cell membrane. This chain is Putative antiporter subunit mnhC2 (mnhC2), found in Staphylococcus saprophyticus subsp. saprophyticus (strain ATCC 15305 / DSM 20229 / NCIMB 8711 / NCTC 7292 / S-41).